A 252-amino-acid chain; its full sequence is Phosphate import ATP-binding protein PstB (252 aa).

Residues Met6 to Ile247 form the ABC transporter domain. Position 38–45 (Gly38–Ser45) interacts with ATP.

This sequence belongs to the ABC transporter superfamily. Phosphate importer (TC 3.A.1.7) family. The complex is composed of two ATP-binding proteins (PstB), two transmembrane proteins (PstC and PstA) and a solute-binding protein (PstS).

It localises to the cell inner membrane. The enzyme catalyses phosphate(out) + ATP + H2O = ADP + 2 phosphate(in) + H(+). Functionally, part of the ABC transporter complex PstSACB involved in phosphate import. Responsible for energy coupling to the transport system. This is Phosphate import ATP-binding protein PstB from Psychrobacter cryohalolentis (strain ATCC BAA-1226 / DSM 17306 / VKM B-2378 / K5).